Consider the following 394-residue polypeptide: MTSYTDKGEKHARGRFLSFHHLTFWVGNAKQAASFYCDKFGFEPCAYKGLETGSRDVVSHAIKQDKIIFVFQSPLNPGNQEMGQHMIKHGDGVKDVAFQVEDCDFLFQKAKDHGAVVVREPWIEEDEGGKVKYAVLQTYGDTTHTLLEYLGPYRGVFLPGYKEPLFRDPLLPTLPSGCLSFIDHIVGNQPDNEMVPIVEWYQKCLLFHRFWSVDDKQIHTEYSSLRSIVVTNYEETIKMPINEPAAGKKKSQIQEYVDYYGSAGVQHIALNTSNIIKAVKNLKSRGIEFLSAPDTYYEELRKKLKTAKITVKEDLNVLQELKILVDYDDKGYLLQIFTKPMQDRPTLFLEVIQRYNHFGFGAGNFKSLFEAIETDQDARGNLTIYAANGEHQVL.

VOC domains follow at residues 18-149 (SFHH…LLEY) and 181-339 (FIDH…IFTK). Fe cation-binding residues include His-184, His-267, and Glu-350.

It belongs to the 4HPPD family. In terms of assembly, homodimer. Requires Fe cation as cofactor.

The protein resides in the cytoplasm. It localises to the endoplasmic reticulum membrane. Its subcellular location is the golgi apparatus membrane. The catalysed reaction is 3-(4-hydroxyphenyl)pyruvate + O2 = homogentisate + CO2. Its pathway is amino-acid degradation; L-phenylalanine degradation; acetoacetate and fumarate from L-phenylalanine: step 3/6. In terms of biological role, catalyzes the conversion of 4-hydroxyphenylpyruvic acid to homogentisic acid, one of the steps in tyrosine catabolism. This Xenopus tropicalis (Western clawed frog) protein is 4-hydroxyphenylpyruvate dioxygenase (hpd).